We begin with the raw amino-acid sequence, 246 residues long: Glutamate/aspartate import permease protein GltJ (246 aa).

An ABC transmembrane type-1 domain is found at 29 to 230 (FQVTIALSIC…LINAFIMLVM (202 aa)). The next 5 membrane-spanning stretches (helical) occupy residues 33 to 53 (IALS…FGIL), 74 to 94 (NVPL…LLPE), 104 to 124 (LDPN…FTAA), 179 to 196 (LVKN…DMAA), and 212 to 232 (FTAI…VMTL).

This sequence belongs to the binding-protein-dependent transport system permease family. HisMQ subfamily. The complex is composed of two ATP-binding proteins (GltL), two transmembrane proteins (GltJ and GltK) and a solute-binding protein (GltI).

The protein localises to the cell inner membrane. Part of the ABC transporter complex GltIJKL involved in glutamate and aspartate uptake. Probably responsible for the translocation of the substrate across the membrane. This chain is Glutamate/aspartate import permease protein GltJ (gltJ), found in Escherichia coli O6:H1 (strain CFT073 / ATCC 700928 / UPEC).